A 221-amino-acid chain; its full sequence is Small ribosomal subunit protein uS3 (221 aa).

The region spanning 39–107 is the KH type-2 domain; that stretch reads LRKFLKDKLK…EVFLSIQEVR (69 aa).

It belongs to the universal ribosomal protein uS3 family. In terms of assembly, part of the 30S ribosomal subunit. Forms a tight complex with proteins S10 and S14.

Functionally, binds the lower part of the 30S subunit head. Binds mRNA in the 70S ribosome, positioning it for translation. The chain is Small ribosomal subunit protein uS3 from Bdellovibrio bacteriovorus (strain ATCC 15356 / DSM 50701 / NCIMB 9529 / HD100).